Consider the following 212-residue polypeptide: ATP-dependent dethiobiotin synthetase BioD (212 aa).

Residue 12–17 participates in ATP binding; it reads DCGKTF. Mg(2+) is bound at residue threonine 16. Lysine 33 is an active-site residue. Serine 37 contributes to the substrate binding site. ATP contacts are provided by residues aspartate 50, 110 to 113, and 170 to 171; these read EGAG and NC. Mg(2+) is bound by residues aspartate 50 and glutamate 110.

Belongs to the dethiobiotin synthetase family. Homodimer. The cofactor is Mg(2+).

The protein localises to the cytoplasm. The catalysed reaction is (7R,8S)-7,8-diammoniononanoate + CO2 + ATP = (4R,5S)-dethiobiotin + ADP + phosphate + 3 H(+). It functions in the pathway cofactor biosynthesis; biotin biosynthesis; biotin from 7,8-diaminononanoate: step 1/2. Catalyzes a mechanistically unusual reaction, the ATP-dependent insertion of CO2 between the N7 and N8 nitrogen atoms of 7,8-diaminopelargonic acid (DAPA, also called 7,8-diammoniononanoate) to form a ureido ring. The protein is ATP-dependent dethiobiotin synthetase BioD of Legionella pneumophila (strain Paris).